The primary structure comprises 789 residues: Protein translocase subunit SecA (789 aa).

ATP-binding positions include Gln85, 103-107 (GEGKT), and Asp492.

Belongs to the SecA family. As to quaternary structure, monomer and homodimer. Part of the essential Sec protein translocation apparatus which comprises SecA, SecYEG and auxiliary proteins SecDF. Other proteins may also be involved.

It localises to the cell membrane. Its subcellular location is the cytoplasm. The catalysed reaction is ATP + H2O + cellular proteinSide 1 = ADP + phosphate + cellular proteinSide 2.. In terms of biological role, part of the Sec protein translocase complex. Interacts with the SecYEG preprotein conducting channel. Has a central role in coupling the hydrolysis of ATP to the transfer of proteins into and across the cell membrane, serving as an ATP-driven molecular motor driving the stepwise translocation of polypeptide chains across the membrane. This Limosilactobacillus fermentum (strain NBRC 3956 / LMG 18251) (Lactobacillus fermentum) protein is Protein translocase subunit SecA.